The following is a 135-amino-acid chain: C-type lectin Cal (135 aa).

Cystine bridges form between Cys-3/Cys-14, Cys-31/Cys-131, Cys-38/Cys-133, and Cys-106/Cys-123. Residues 10–132 enclose the C-type lectin domain; sequence MNGLCYKIFN…CESKDAFLCQ (123 aa). The Ca(2+) site is built by Gln-96, Asp-98, Glu-104, Asn-119, and Asp-120. The Galactose-binding motif lies at 96–98; it reads QPD.

It belongs to the true venom lectin family. Homodecamer of disulfide-linked dimers arranged in two pseudo-5-fold symmetric pentamers. In terms of tissue distribution, expressed by the venom gland.

Its subcellular location is the secreted. Its function is as follows. Galactose-binding protein which recognizes specific carbohydrate structures and agglutinates a variety of animal cells by binding to cell-surface glycoproteins and glycolipids. Calcium-dependent lectin. Shows high hemagglutinating activity (MHC=10 ng/ml). This chain is C-type lectin Cal, found in Crotalus atrox (Western diamondback rattlesnake).